Reading from the N-terminus, the 282-residue chain is MEAVVDTNNFVLLLWSGAQLPKDIEAVVGSLTKKVGPNGKVSLEHSDRLHIASHAMSSFDVVLSGVCESPSLIHSMELLSKLAKLLKPDGKLILREPVGSNDSRSPEKIISTLKLSGFVSISQANEVKPSIVEISAQKPSFEVGAKTALSLSFAPKPAQPKAETSAAQIWTLSAQDIDDEDVDLLDSDTLLDEDDLKKPDPLSLKAACGPGSGKKKACKNCTCGLAEQENGDATEKKSVTSSCGSCYLGDAFRCSTCPYLGMPAFKPGEKIALTDRQLKGDL.

Residues 5 to 151 are N-terminal SAM-like domain; the sequence is VDTNNFVLLL…EVGAKTALSL (147 aa). The segment at 152–196 is linker; sequence SFAPKPAQPKAETSAAQIWTLSAQDIDDEDVDLLDSDTLLDEDDL. 4 residues coordinate [2Fe-2S] cluster: C208, C218, C221, and C223. The fe-S binding site A stretch occupies residues 208–223; it reads CGPGSGKKKACKNCTC. 4 residues coordinate [4Fe-4S] cluster: C243, C246, C254, and C257. 2 consecutive short sequence motifs (cx2C motif) follow at residues 243–246 and 254–257; these read CGSC and CSTC. The interval 243 to 257 is fe-S binding site B; the sequence is CGSCYLGDAFRCSTC.

This sequence belongs to the anamorsin family. Monomer. It depends on [2Fe-2S] cluster as a cofactor. [4Fe-4S] cluster is required as a cofactor.

It is found in the cytoplasm. It localises to the mitochondrion intermembrane space. Its function is as follows. Component of the cytosolic iron-sulfur (Fe-S) protein assembly (CIA) machinery. Required for the maturation of extramitochondrial Fe-S proteins. Part of an electron transfer chain functioning in an early step of cytosolic Fe-S biogenesis, facilitating the de novo assembly of a [4Fe-4S] cluster on the cytosolic Fe-S scaffold complex. Electrons are transferred from NADPH via a FAD- and FMN-containing diflavin oxidoreductase. Together with the diflavin oxidoreductase, also required for the assembly of the diferric tyrosyl radical cofactor of ribonucleotide reductase (RNR), probably by providing electrons for reduction during radical cofactor maturation in the catalytic small subunit. The polypeptide is Anamorsin homolog (Nematostella vectensis (Starlet sea anemone)).